We begin with the raw amino-acid sequence, 253 residues long: MHIDVIGHGPALVLLHGWALHGGVFAPLVERLAPHYQLHLVDLPGHGFSRDDSTPLALPYVVAEIAAATPPAVWLGWSLGGLFALHAAATLPQVRGLAMIAATPRFVRGSDWPSAVQREVFVQFGVELSRDYRGTLERFLALDTLGSAHARSELRSLRETLTARGEPAPEALQQGLTLLERTDLRRTVPQLARPSLWIAGQRDRLVPAAGMHAAAALSPHAQALTIAGGGHAPFLGHADQVSEALQRFVASVP.

Residues Trp18, 78-79, and 139-143 contribute to the substrate site; these read SL and FLALD. The Nucleophile role is filled by Ser78. Catalysis depends on residues Asp203 and His231. Substrate is bound at residue His231.

Belongs to the AB hydrolase superfamily. Carboxylesterase BioH family. As to quaternary structure, monomer.

Its subcellular location is the cytoplasm. It carries out the reaction 6-carboxyhexanoyl-[ACP] methyl ester + H2O = 6-carboxyhexanoyl-[ACP] + methanol + H(+). It participates in cofactor biosynthesis; biotin biosynthesis. Functionally, the physiological role of BioH is to remove the methyl group introduced by BioC when the pimeloyl moiety is complete. It allows to synthesize pimeloyl-ACP via the fatty acid synthetic pathway through the hydrolysis of the ester bonds of pimeloyl-ACP esters. This is Pimeloyl-[acyl-carrier protein] methyl ester esterase from Xanthomonas axonopodis pv. citri (strain 306).